Consider the following 92-residue polypeptide: Small ribosomal subunit protein uS19c (92 aa).

It belongs to the universal ribosomal protein uS19 family.

It localises to the plastid. Its subcellular location is the chloroplast. Its function is as follows. Protein S19 forms a complex with S13 that binds strongly to the 16S ribosomal RNA. This is Small ribosomal subunit protein uS19c from Platanus occidentalis (Sycamore).